Here is a 489-residue protein sequence, read N- to C-terminus: Glycogen synthase (489 aa).

Lysine 15 is a binding site for ADP-alpha-D-glucose.

Belongs to the glycosyltransferase 1 family. Bacterial/plant glycogen synthase subfamily.

It carries out the reaction [(1-&gt;4)-alpha-D-glucosyl](n) + ADP-alpha-D-glucose = [(1-&gt;4)-alpha-D-glucosyl](n+1) + ADP + H(+). The protein operates within glycan biosynthesis; glycogen biosynthesis. Functionally, synthesizes alpha-1,4-glucan chains using ADP-glucose. The polypeptide is Glycogen synthase (Francisella tularensis subsp. mediasiatica (strain FSC147)).